Here is a 215-residue protein sequence, read N- to C-terminus: Large ribosomal subunit protein uL4 (215 aa).

Residues 43 to 101 (HQRQGTSKTKERGEVRGSGRKLYRQKGTGNARVGDAQSPIRRGGGRAHGARPRDYAHDL) are disordered. Residues 50–59 (KTKERGEVRG) are compositionally biased toward basic and acidic residues.

Belongs to the universal ribosomal protein uL4 family. Part of the 50S ribosomal subunit.

In terms of biological role, one of the primary rRNA binding proteins, this protein initially binds near the 5'-end of the 23S rRNA. It is important during the early stages of 50S assembly. It makes multiple contacts with different domains of the 23S rRNA in the assembled 50S subunit and ribosome. Forms part of the polypeptide exit tunnel. The chain is Large ribosomal subunit protein uL4 from Salinibacter ruber (strain DSM 13855 / M31).